A 926-amino-acid chain; its full sequence is MLRAQRLRLARLRACVSRGLHHKPVMALRREDVNAWERRAPLAPKHIKGITKLGYKVLIQPSNRRAIHDKEYVRAGGILQEDITEACLILGVKRPPEEKLMSKKTYAFFSHTIKAQEANMSLLDEVLKQEIRLIDYEKMVDHRGSRIVAFGHWAGVAGMINILHGMGLRLLALGHHTPFMHLGMAHNYRNSSQAVQAVRDAGYEISLGLMPKSIGPLTFVFTGTGNVSKGAQEVFNELPCEYVEPHELKEVSKTGDLRKVYGTVLSRHHHLVRKTDGVYDPVEYEKYPERYISRFNADIAPYTTCLINGIYWEQNTPRLLTRQDAQSLLVPVKSSVVPVEGCPELPHKLVAICDISADTGGSIDFMTECTTIERPFCMYDADQHIIHDSVEGSGILMCSIDNLPAQLPIEATEYFGDMLYPYVEEMLLSDASQPLESQNFSPVVRDAVITSNGLLTDKYKYIQKLRESRERIQFLSMSTKKKVLVLGSGYVSGPVLEYLSRGNNIEITLGSDMTNQMQQLSKKYDINTVNVTVGKQEDKLQSLVESQDLVISLLPYVLHPVVAKACIDSKVNMVTASYITPAMKELEKSVDDAGITVIGELGLDPGLDHMLAMETIDKAKDLGATIESYVSYCGGLPAPEHSDNPLRYKFSWSPVGVLMNIMQPASYLLNGKVVNVTGGVSFLNSVTPMDYFPGLNLEGYPNRDSTKYAEIYGISSAHTLLRGTLRYKGYSKALNGFVKLGLINRETYPALRPEANPLTWKQLLCDLVGISRSSSCEKLKEVVFTKLGGDSTQLEAAEWLGLLGDEQVPQAESIVDAFSKHLVSKLSYGPEEKDMIVMRDSFGIRHPSGHLENKTIDLVVYGDFNGFSAMAKTVGLPTAMAAKMLLDGEIETKGLMGPFSKEIYGPILERIKAEGIVFNTQSTIKL.

The N-terminal 27 residues, 1-27, are a transit peptide targeting the mitochondrion; sequence MLRAQRLRLARLRACVSRGLHHKPVMA. Residues 28–455 are lysine-ketoglutarate reductase; that stretch reads LRREDVNAWE…DAVITSNGLL (428 aa). N6-acetyllysine occurs at positions 48, 52, and 56. At Lys93 the chain carries N6-acetyllysine; alternate. Lys93 bears the N6-succinyllysine; alternate mark. The residue at position 128 (Lys128) is an N6-acetyllysine. An N6-acetyllysine; alternate modification is found at Lys138. Lys138 carries the post-translational modification N6-succinyllysine; alternate. At Lys274 the chain carries N6-succinyllysine. Lys286 is modified (N6-acetyllysine; alternate). Lys286 bears the N6-succinyllysine; alternate mark. Residue Lys333 is modified to N6-succinyllysine. At Lys458 the chain carries N6-acetyllysine; alternate. Lys458 bears the N6-succinyllysine; alternate mark. The segment at 477–926 is saccharopine dehydrogenase; it reads MSTKKKVLVL…VFNTQSTIKL (450 aa). NAD(+)-binding residues include Ser488, Asp512, and Gln516. An N6-acetyllysine; alternate mark is found at Lys523 and Lys535. N6-succinyllysine; alternate is present on residues Lys523 and Lys535. Residues Leu554, Ala576, and Ser577 each coordinate NAD(+). Position 577–578 (577–578) interacts with L-saccharopine; sequence SY. Lys584 is modified (N6-acetyllysine; alternate). Lys584 carries the post-translational modification N6-succinyllysine; alternate. The NAD(+) site is built by Leu603, Asp604, and Pro605. L-saccharopine is bound at residue Asp604. L-saccharopine is bound at residue Arg703. Residue Lys707 is modified to N6-acetyllysine. 724–726 provides a ligand contact to L-saccharopine; sequence TLR. At Lys732 the chain carries N6-succinyllysine. At Lys739 the chain carries N6-acetyllysine. Lys761 carries the post-translational modification N6-acetyllysine; alternate. Residue Lys761 is modified to N6-succinyllysine; alternate. N6-acetyllysine occurs at positions 778 and 780.

The protein in the N-terminal section; belongs to the AlaDH/PNT family. In the C-terminal section; belongs to the saccharopine dehydrogenase family. In terms of assembly, homotetramer.

The protein resides in the mitochondrion. The catalysed reaction is L-saccharopine + NADP(+) + H2O = L-lysine + 2-oxoglutarate + NADPH + H(+). It catalyses the reaction L-saccharopine + NAD(+) + H2O = (S)-2-amino-6-oxohexanoate + L-glutamate + NADH + H(+). The protein operates within amino-acid degradation; L-lysine degradation via saccharopine pathway; glutaryl-CoA from L-lysine: step 1/6. Its pathway is amino-acid degradation; L-lysine degradation via saccharopine pathway; glutaryl-CoA from L-lysine: step 2/6. Functionally, bifunctional enzyme that catalyzes the first two steps in lysine degradation. In Rattus norvegicus (Rat), this protein is Alpha-aminoadipic semialdehyde synthase, mitochondrial.